We begin with the raw amino-acid sequence, 20 residues long: Cytochrome c oxidase subunit 7B-liver, mitochondrial (20 aa).

Belongs to the cytochrome c oxidase VIIb family. In terms of assembly, component of the cytochrome c oxidase (complex IV, CIV), a multisubunit enzyme composed of 14 subunits. The complex is composed of a catalytic core of 3 subunits MT-CO1, MT-CO2 and MT-CO3, encoded in the mitochondrial DNA, and 11 supernumerary subunits COX4I, COX5A, COX5B, COX6A, COX6B, COX6C, COX7A, COX7B, COX7C, COX8 and NDUFA4, which are encoded in the nuclear genome. The complex exists as a monomer or a dimer and forms supercomplexes (SCs) in the inner mitochondrial membrane with NADH-ubiquinone oxidoreductase (complex I, CI) and ubiquinol-cytochrome c oxidoreductase (cytochrome b-c1 complex, complex III, CIII), resulting in different assemblies (supercomplex SCI(1)III(2)IV(1) and megacomplex MCI(2)III(2)IV(2)).

It is found in the mitochondrion inner membrane. It carries out the reaction 4 Fe(II)-[cytochrome c] + O2 + 8 H(+)(in) = 4 Fe(III)-[cytochrome c] + 2 H2O + 4 H(+)(out). It functions in the pathway energy metabolism; oxidative phosphorylation. Component of the cytochrome c oxidase, the last enzyme in the mitochondrial electron transport chain which drives oxidative phosphorylation. The respiratory chain contains 3 multisubunit complexes succinate dehydrogenase (complex II, CII), ubiquinol-cytochrome c oxidoreductase (cytochrome b-c1 complex, complex III, CIII) and cytochrome c oxidase (complex IV, CIV), that cooperate to transfer electrons derived from NADH and succinate to molecular oxygen, creating an electrochemical gradient over the inner membrane that drives transmembrane transport and the ATP synthase. Cytochrome c oxidase is the component of the respiratory chain that catalyzes the reduction of oxygen to water. Electrons originating from reduced cytochrome c in the intermembrane space (IMS) are transferred via the dinuclear copper A center (CU(A)) of subunit 2 and heme A of subunit 1 to the active site in subunit 1, a binuclear center (BNC) formed by heme A3 and copper B (CU(B)). The BNC reduces molecular oxygen to 2 water molecules using 4 electrons from cytochrome c in the IMS and 4 protons from the mitochondrial matrix. The chain is Cytochrome c oxidase subunit 7B-liver, mitochondrial from Thunnus obesus (Bigeye tuna).